The primary structure comprises 1461 residues: Calmodulin-regulated spectrin-associated protein 2 (1461 aa).

The region spanning 211 to 324 (PGGQKARYRK…FMAELFWWFE (114 aa)) is the Calponin-homology (CH) domain. The segment at 361-389 (RDSSSSSDFSSRYTRPQTHSSASGGIRRS) is disordered. Composition is skewed to low complexity over residues 362–371 (DSSSSSDFSS) and 380–389 (SSASGGIRRS). 2 positions are modified to phosphoserine: Ser391 and Ser393. Residue Thr401 is modified to Phosphothreonine. Ser439, Ser572, Ser573, Ser585, and Ser647 each carry phosphoserine. 2 disordered regions span residues 573 to 613 (SPDN…EDSS) and 639 to 704 (ASNP…GSEL). At Thr652 the chain carries Phosphothreonine. Position 654 is a phosphoserine (Ser654). Low complexity predominate over residues 654-673 (STKSQPGSSASSSSGVKMTS). Residues 677–687 (QKFRKLNHTDG) show a composition bias toward basic and acidic residues. Residues 730-767 (LLASEMVHLRMRLEEKRRAIEAQKKKMEAAFTKQRQKM) are a coiled coil. Residues 787-826 (REEAAGAEDEKVYTDRAKERESQKMDGQRSKSLADIKESM) show a composition bias toward basic and acidic residues. A disordered region spans residues 787–855 (REEAAGAEDE…QWNLTSPSEE (69 aa)). Ser836 is subject to Phosphoserine. A coiled-coil region spans residues 861-900 (EILEYTKSIEKLNSSLHFLQQEMQRLSLQQEMLMQMREQQ). Residues 896–1007 (MREQQAWVIS…IQTRSFVCFG (112 aa)) form an MBD region region. A phosphoserine mark is found at Ser905 and Ser910. Disordered regions lie at residues 921–992 (RQAG…RRFS), 1004–1044 (VCFG…GEKE), 1069–1090 (NEDQLSQPTEPPPKPVFPPTAP), 1102–1124 (DLKPPEKADVSVEKLDGESDKEQ), and 1163–1321 (KETQ…EYTG). Positions 926–937 (SSAAAPFSSDSP) are enriched in low complexity. Over residues 943 to 962 (SPQSSTRKSASFSVKNQRTP) the composition is skewed to polar residues. A phosphothreonine mark is found at Thr970, Thr975, and Thr977. Residues Ser981 and Ser992 each carry the phosphoserine modification. Positions 1011–1028 (EPQKEPKQKEEIKKEPSE) are enriched in basic and acidic residues. Residues 1077 to 1089 (TEPPPKPVFPPTA) show a composition bias toward pro residues. Composition is skewed to basic and acidic residues over residues 1104–1124 (KPPEKADVSVEKLDGESDKEQ) and 1163–1224 (KETQ…DTVI). Position 1120 is a phosphoserine (Ser1120). A coiled-coil region spans residues 1138–1210 (KDDQKAENDM…REFIRQEYMR (73 aa)). Over residues 1259–1271 (SSLSLASLNTGDS) the composition is skewed to polar residues. Phosphoserine occurs at positions 1285, 1291, and 1293. Over residues 1306-1318 (NASTTSSVASGTE) the composition is skewed to polar residues. The CKK domain occupies 1321-1455 (GPKLYKEPSA…QTKRPVTPKK (135 aa)).

The protein belongs to the CAMSAP1 family. Interacts with CAMSAP3. Interacts with KATNA1 and KATNB1; leading to regulate the length of CAMSAP2-decorated microtubule stretches. Interacts with a complex formed by AKAP9 and PDE4DIP isoform 2/MMG8/SMYLE, which recruits CAMSAP2 to the Golgi. Interacts with MAPRE1/EB1.

The protein resides in the cytoplasm. Its subcellular location is the cytoskeleton. It localises to the golgi apparatus. It is found in the cilium basal body. Its function is as follows. Key microtubule-organizing protein that specifically binds the minus-end of non-centrosomal microtubules and regulates their dynamics and organization. Specifically recognizes growing microtubule minus-ends and autonomously decorates and stabilizes microtubule lattice formed by microtubule minus-end polymerization. Acts on free microtubule minus-ends that are not capped by microtubule-nucleating proteins or other factors and protects microtubule minus-ends from depolymerization. In addition, it also reduces the velocity of microtubule polymerization. Through the microtubule cytoskeleton, also regulates the organization of cellular organelles including the Golgi and the early endosomes. Essential for the tethering, but not for nucleation of non-centrosomal microtubules at the Golgi: together with Golgi-associated proteins AKAP9 and PDE4DIP, required to tether non-centrosomal minus-end microtubules to the Golgi, an important step for polarized cell movement. Also acts as a regulator of neuronal polarity and development: localizes to non-centrosomal microtubule minus-ends in neurons and stabilizes non-centrosomal microtubules, which is required for neuronal polarity, axon specification and dendritic branch formation. Through the microtubule cytoskeleton, regulates the autophagosome transport. The sequence is that of Calmodulin-regulated spectrin-associated protein 2 from Mus musculus (Mouse).